A 177-amino-acid chain; its full sequence is Secretion monitor (177 aa).

The first 30 residues, 1–30 (MIGILNRWRQFGRRYFWPHLLLGMVAASLG), serve as a signal peptide directing secretion.

Belongs to the SecM family.

It is found in the cytoplasm. It localises to the cytosol. The protein localises to the periplasm. Functionally, regulates secA expression by translational coupling of the secM secA operon. Translational pausing at a specific Pro residue 5 residues before the end of the protein may allow disruption of a mRNA repressor helix that normally suppresses secA translation initiation. In Yersinia enterocolitica serotype O:8 / biotype 1B (strain NCTC 13174 / 8081), this protein is Secretion monitor.